The sequence spans 451 residues: MTKRKLRNNWIIVTTMITFVTIFLFCLIIIFFLKDTLHNSELDDAERSSSDINNLFHSKPVKDISALDLNASLGNFQEIIIYDEHNNKLFETSNDNTVRVEPGYEHRYFDRVIKKRYKGIEYLIIKEPITTQDFKGYSLLIHSLENYDNIVKSLYIIALAFGVIATIITATISYVFSTQITKPLVSLSNKMIEIRRDGFQNKLQLNTNYEEIDNLANTFNEMMSQIEESFNQQRQFVEDASHELRTPLQIIQGHLNLIQRWGKKDPAVLEESLNISIEEMNRIIKLVEELLELTKGDVNDISSEAQTVHINDEIRSRIHSLKQLHPDYQFDTDLTSKNLEIKMKPHQFEQLFLIFIDNAIKYDVKNKKIKVKTRLKNKQKIIEITDHGIGIPEEDQDFIFDRFYRVDKSRSRSQGGNGLGLSIAQKIIQLNGGSIKIKSEINKGTTFKIIF.

The next 2 helical transmembrane spans lie at 11-31 (IIVT…IIIF) and 156-176 (IIAL…SYVF). An HAMP domain is found at 178–231 (TQITKPLVSLSNKMIEIRRDGFQNKLQLNTNYEEIDNLANTFNEMMSQIEESFN). Positions 239 to 451 (DASHELRTPL…NKGTTFKIIF (213 aa)) constitute a Histidine kinase domain. His242 is modified (phosphohistidine; by autocatalysis).

Post-translationally, autophosphorylated.

Its subcellular location is the cell membrane. It carries out the reaction ATP + protein L-histidine = ADP + protein N-phospho-L-histidine.. Functionally, member of the two-component regulatory system ArlS/ArlR involved in the regulation of adhesion, autolysis, multidrug resistance and virulence. ArlS probably functions as a sensor protein kinase which is autophosphorylated at a histidine residue and transfers its phosphate group to ArlR. The chain is Signal transduction histidine-protein kinase ArlS (arlS) from Staphylococcus aureus (strain USA300).